The following is a 391-amino-acid chain: Probable protein arginine N-methyltransferase 6.1 (391 aa).

Residues 1–35 are disordered; sequence MLPSHLNGHSPLARRCPRLSAASPPATGDSDAAAA. The span at 20–35 shows a compositional bias: low complexity; the sequence is SAASPPATGDSDAAAA. Positions 45–391 constitute an SAM-dependent MTase PRMT-type domain; it reads DRIYFQSYSH…QTLVKDYAMR (347 aa). S-adenosyl-L-methionine is bound by residues His-58, Arg-67, Gly-91, Glu-113, and Glu-142. Active-site residues include Glu-156 and Glu-165.

This sequence belongs to the class I-like SAM-binding methyltransferase superfamily. Protein arginine N-methyltransferase family. PRMT6 subfamily.

Functionally, arginine methyltransferase that can both catalyze the formation of omega-N monomethylarginine (MMA) and asymmetrical dimethylarginine (aDMA). The protein is Probable protein arginine N-methyltransferase 6.1 (PRMT6.1) of Oryza sativa subsp. japonica (Rice).